A 61-amino-acid polypeptide reads, in one-letter code: MNINKESIHGFLKQCERVLRISKKPDNEEYLTVAKVTGVGIIIIGLIGFILSIVSQVLFYS.

The chain crosses the membrane as a helical span at residues Val39–Phe59.

It belongs to the SecE/SEC61-gamma family. In terms of assembly, component of the Sec protein translocase complex. Heterotrimer consisting of SecY (alpha), SecG (beta) and SecE (gamma) subunits. The heterotrimers can form oligomers, although 1 heterotrimer is thought to be able to translocate proteins. Interacts with the ribosome. May interact with SecDF, and other proteins may be involved.

The protein localises to the cell membrane. Its function is as follows. Essential subunit of the Sec protein translocation channel SecYEG. Clamps together the 2 halves of SecY. May contact the channel plug during translocation. This chain is Protein translocase subunit SecE, found in Methanosphaera stadtmanae (strain ATCC 43021 / DSM 3091 / JCM 11832 / MCB-3).